Here is a 509-residue protein sequence, read N- to C-terminus: Maturase K (509 aa).

The protein belongs to the intron maturase 2 family. MatK subfamily.

Its subcellular location is the plastid. The protein localises to the chloroplast. Usually encoded in the trnK tRNA gene intron. Probably assists in splicing its own and other chloroplast group II introns. The sequence is that of Maturase K from Nicotiana alata (Winged tobacco).